The chain runs to 463 residues: Digalactosyldiacylglycerol synthase 2, chloroplastic (463 aa).

The first 22 residues, Met1 to Ala22, serve as a signal peptide directing secretion.

This sequence belongs to the glycosyltransferase group 1 family. Glycosyltransferase 4 subfamily. In terms of tissue distribution, high expression in nodules infected cells, and low in nodule and root vascular tissue.

It is found in the plastid. The protein resides in the chloroplast outer membrane. Its subcellular location is the plastid outer membrane. The catalysed reaction is a 1,2-diacyl-3-O-(beta-D-galactosyl)-sn-glycerol + UDP-alpha-D-galactose = a 1,2-diacyl-3-O-[alpha-D-galactosyl-(1-&gt;6)-beta-D-galactosyl]-sn-glycerol + UDP + H(+). Its function is as follows. Involved in the synthesis of diacylglycerol galactolipids that are specifically found in thylakoid and in nodule peribacteroid membranes. Specific for alpha-glycosidic linkages. The polypeptide is Digalactosyldiacylglycerol synthase 2, chloroplastic (Lotus japonicus (Lotus corniculatus var. japonicus)).